We begin with the raw amino-acid sequence, 228 residues long: Thrombin-like enzyme gyroxin analog (228 aa).

In terms of domain architecture, Peptidase S1 spans 1–222; it reads VIGGDECNIN…YLDWIQSVIA (222 aa). 6 cysteine pairs are disulfide-bonded: Cys7/Cys138, Cys28/Cys44, Cys78/Cys227, Cys117/Cys183, Cys149/Cys162, and Cys173/Cys198. The active-site Charge relay system is His43. 2 N-linked (GlcNAc...) asparagine glycosylation sites follow: Asn45 and Asn81. Catalysis depends on Asp88, which acts as the Charge relay system. A glycan (N-linked (GlcNAc...) asparagine) is linked at Asn145. Ser177 functions as the Charge relay system in the catalytic mechanism. The N-linked (GlcNAc...) asparagine glycan is linked to Asn224.

This sequence belongs to the peptidase S1 family. Snake venom subfamily. As to quaternary structure, monomer. Expressed by the venom gland.

It is found in the secreted. The catalysed reaction is Selective cleavage of Arg-|-Xaa bond in fibrinogen, to form fibrin, and release fibrinopeptide A. The specificity of further degradation of fibrinogen varies with species origin of the enzyme.. Inhibited competitively by amidines and guanidines, and irreversibly inhibited by diisopropylfluorophosphate. In terms of biological role, thrombin-like snake venom serine protease, that cleaves alpha-chain of fibrinogen (FGA) releases only fibrinopeptide A. Shows coagulant, esterase and amidase activities. Induces the barrel rotation syndrome in mice, which is manifested by gyroxin-like, rapid rolling motions. May also reversibly increase the permeability of the blood brain barrier (BBB) in mice. This chain is Thrombin-like enzyme gyroxin analog, found in Lachesis muta muta (Bushmaster).